We begin with the raw amino-acid sequence, 333 residues long: Pollen allergen KBG 41 (333 aa).

Positions 1 to 23 (MAVHQYTVALFLAVALVAGPAAS) are cleaved as a signal peptide. A run of 2 repeats spans residues 309–320 (TGAATAAAGGYK) and 321–332 (TGAATPTAGGYK). Residues 309-332 (TGAATAAAGGYKTGAATPTAGGYK) are 2 X 12 AA tandem repeats.

It belongs to the Poa p IX/Phl p VI allergen family. In terms of tissue distribution, pollen.

The polypeptide is Pollen allergen KBG 41 (Poa pratensis (Kentucky bluegrass)).